We begin with the raw amino-acid sequence, 311 residues long: Salutaridine reductase (311 aa).

Residue 17-40 (VTGGNKGIGFEICKQLSSSGIMVV) coordinates NADP(+). S180 contributes to the substrate binding site. Y236 functions as the Proton acceptor in the catalytic mechanism.

This sequence belongs to the short-chain dehydrogenases/reductases (SDR) family.

It carries out the reaction (7S)-salutaridinol + NADP(+) = salutaridine + NADPH + H(+). Its activity is regulated as follows. Subject to substrate inhibition at salutaridine concentrations higher than 20 to 30 uM. Its function is as follows. Involved in biosynthesis of morphinan-type benzylisoquinoline alkaloids. Catalyzes the stereospecific conversion of salutaridine to salutaridinol. In Papaver bracteatum (Great scarlet poppy), this protein is Salutaridine reductase.